Consider the following 364-residue polypeptide: tRNA 2-selenouridine synthase (364 aa).

The Rhodanese domain maps to 15-138 (FVNDTPLMDM…LRRFLIETID (124 aa)). Cys-98 functions as the S-selanylcysteine intermediate in the catalytic mechanism.

This sequence belongs to the SelU family. In terms of assembly, monomer.

It carries out the reaction 5-methylaminomethyl-2-thiouridine(34) in tRNA + selenophosphate + (2E)-geranyl diphosphate + H2O + H(+) = 5-methylaminomethyl-2-selenouridine(34) in tRNA + (2E)-thiogeraniol + phosphate + diphosphate. It catalyses the reaction 5-methylaminomethyl-2-thiouridine(34) in tRNA + (2E)-geranyl diphosphate = 5-methylaminomethyl-S-(2E)-geranyl-thiouridine(34) in tRNA + diphosphate. The catalysed reaction is 5-methylaminomethyl-S-(2E)-geranyl-thiouridine(34) in tRNA + selenophosphate + H(+) = 5-methylaminomethyl-2-(Se-phospho)selenouridine(34) in tRNA + (2E)-thiogeraniol. The enzyme catalyses 5-methylaminomethyl-2-(Se-phospho)selenouridine(34) in tRNA + H2O = 5-methylaminomethyl-2-selenouridine(34) in tRNA + phosphate. In terms of biological role, involved in the post-transcriptional modification of the uridine at the wobble position (U34) of tRNA(Lys), tRNA(Glu) and tRNA(Gln). Catalyzes the conversion of 2-thiouridine (S2U-RNA) to 2-selenouridine (Se2U-RNA). Acts in a two-step process involving geranylation of 2-thiouridine (S2U) to S-geranyl-2-thiouridine (geS2U) and subsequent selenation of the latter derivative to 2-selenouridine (Se2U) in the tRNA chain. The sequence is that of tRNA 2-selenouridine synthase from Photobacterium profundum (strain SS9).